A 440-amino-acid chain; its full sequence is Guanine/hypoxanthine permease PbuG (440 aa).

13 helical membrane passes run 18–38 (IIGGLTTFLSMAYILFVNPIT), 57–77 (AVFTATALASAAGCILMGLIA), 81–101 (IAIAPGMGLNAFFAFSVVLGM), 107–127 (AALSGVFISGLIFVALSLTGF), 142–162 (AVGAGIGLFITFVGLQGSGII), 175–195 (IHSGPVLLTIFGVIVTVILMV), 201–221 (GVFIGMLLTAVAGMIFGLVPV), 251–271 (MLIVILTFLFVGFFDTAGTLV), 291–311 (ALLADSSSIVIGAVLGTSTTT), 327–347 (GFAAIVTGILFLLATFFSPLL), 354–374 (VTAPALIIVGALMVAPLGKIA), 388–408 (MIMMPLTYSIATGIAIGFIFY), and 419–439 (KEVHPIMYGLFVVFILYFIFL).

It belongs to the nucleobase:cation symporter-2 (NCS2) (TC 2.A.40) family. Azg-like subfamily.

It localises to the cell membrane. Involved in the uptake of the purine bases hypoxanthine and guanine. The protein is Guanine/hypoxanthine permease PbuG (pbuG) of Bacillus subtilis (strain 168).